We begin with the raw amino-acid sequence, 758 residues long: MTTINHTLGFPRIGLKRELKKAQENYWAGKISQQELLETGRELRARHWEQQKQAGVDLVPVGDFAWYDHVLTTSLLLGNVPPRHQNPDGTIDLDTLFRIARGRAPTGEPAAAAEMTKWFNTNYHYIVPEFQQGQEFKLSWTQLLEEVDEALSLGHQVKPVLLGPITYLWLGKVKGQVFDRLSLLQDILPVYQQVLAELAKRGIEWVQIDEPALVLELPAEWLTAYPIAYQALQGQVKLLLTTYFDSIGHNLETIKSLPVQGLHVDLVAGQDDIAQLHESLPKEWVLSLGVINGRNVWRADLTAKHQLIKPLVGSRTLWIGSSCSLLHSPIDLSDETALDAEVKSWFAFALQKCEELALLTAALNQPDGSKQAELDAYSAPIRARRESKRVNNQAVTERLAAINPQDSERNQPYLQRAEIQRQRYNLPLWPTTTIGSFPQTTEIRGLRLDFKKGRVDGTSYRTNICEHIKQAINEQERLGLDVLVHGEAERNDMVEYFGEHLDGFVFTQNGWVQSYGSRCVKPPVIIGDVSRPEAITVEWAKYAQSLTEKPVKGMLTGPVTILCWSFPREDVSRETIAKQIALALRDEVDDLQEAGIGIIQIDEPALREGLPLRREEWQSYLDWAVEAFKLNAAIAKDDTQIHTHMCYCEFNDIMPSIAALDADVITIETSRSDMELLDSFENFSYPNEIGPGVYDIHSPNVPSVEWIEALLRKAADRIPVERLWVNPDCGLKTRGWTETRQSLANMVQAAKRLRESVK.

Residues 17–20 (RELK) and K117 each bind 5-methyltetrahydropteroyltri-L-glutamate. Residues 434–436 (IGS) and E487 each bind L-homocysteine. L-methionine is bound by residues 434-436 (IGS) and E487. Residues 518–519 (RC) and W564 contribute to the 5-methyltetrahydropteroyltri-L-glutamate site. D602 provides a ligand contact to L-homocysteine. An L-methionine-binding site is contributed by D602. A 5-methyltetrahydropteroyltri-L-glutamate-binding site is contributed by E608. Zn(2+) is bound by residues H644, C646, and E668. Residue H697 is the Proton donor of the active site. C729 lines the Zn(2+) pocket.

The protein belongs to the vitamin-B12 independent methionine synthase family. Zn(2+) serves as cofactor.

It catalyses the reaction 5-methyltetrahydropteroyltri-L-glutamate + L-homocysteine = tetrahydropteroyltri-L-glutamate + L-methionine. It functions in the pathway amino-acid biosynthesis; L-methionine biosynthesis via de novo pathway; L-methionine from L-homocysteine (MetE route): step 1/1. Its function is as follows. Catalyzes the transfer of a methyl group from 5-methyltetrahydrofolate to homocysteine resulting in methionine formation. This Photorhabdus laumondii subsp. laumondii (strain DSM 15139 / CIP 105565 / TT01) (Photorhabdus luminescens subsp. laumondii) protein is 5-methyltetrahydropteroyltriglutamate--homocysteine methyltransferase.